We begin with the raw amino-acid sequence, 755 residues long: Catalase-peroxidase (755 aa).

The tryptophyl-tyrosyl-methioninium (Trp-Tyr) (with M-267) cross-link spans 93–241; that stretch reads WHSAGTYRVF…LAAAHMGLIY (149 aa). H94 (proton acceptor) is an active-site residue. Positions 241-267 form a cross-link, tryptophyl-tyrosyl-methioninium (Tyr-Met) (with W-93); that stretch reads YVNPEGPDGNPDPVAAARDIRVTFGRM. Residue H282 participates in heme b binding.

The protein belongs to the peroxidase family. Peroxidase/catalase subfamily. Homodimer or homotetramer. Heme b serves as cofactor. In terms of processing, formation of the three residue Trp-Tyr-Met cross-link is important for the catalase, but not the peroxidase activity of the enzyme.

It localises to the cytoplasm. The enzyme catalyses H2O2 + AH2 = A + 2 H2O. The catalysed reaction is 2 H2O2 = O2 + 2 H2O. Bifunctional enzyme with both catalase and broad-spectrum peroxidase activity. The protein is Catalase-peroxidase of Podospora anserina (strain S / ATCC MYA-4624 / DSM 980 / FGSC 10383) (Pleurage anserina).